The chain runs to 376 residues: Putative glutamate--cysteine ligase 2-1 (376 aa).

Belongs to the glutamate--cysteine ligase type 2 family. YbdK subfamily.

It catalyses the reaction L-cysteine + L-glutamate + ATP = gamma-L-glutamyl-L-cysteine + ADP + phosphate + H(+). In terms of biological role, ATP-dependent carboxylate-amine ligase which exhibits weak glutamate--cysteine ligase activity. This chain is Putative glutamate--cysteine ligase 2-1, found in Rubrobacter xylanophilus (strain DSM 9941 / JCM 11954 / NBRC 16129 / PRD-1).